A 446-amino-acid polypeptide reads, in one-letter code: uncharacterized protein (446 aa).

4 helical membrane-spanning segments follow: residues F69–L89, F98–A118, H169–V189, and G247–V267.

Its subcellular location is the membrane. This is an uncharacterized protein from Neisseria meningitidis serogroup B (strain ATCC BAA-335 / MC58).